The following is a 240-amino-acid chain: Proteasome subunit alpha (240 aa).

This sequence belongs to the peptidase T1A family. The 20S proteasome core is composed of 14 alpha and 14 beta subunits that assemble into four stacked heptameric rings, resulting in a barrel-shaped structure. The two inner rings, each composed of seven catalytic beta subunits, are sandwiched by two outer rings, each composed of seven alpha subunits. The catalytic chamber with the active sites is on the inside of the barrel. Has a gated structure, the ends of the cylinder being occluded by the N-termini of the alpha-subunits. Is capped at one or both ends by the proteasome regulatory ATPase, PAN.

It is found in the cytoplasm. With respect to regulation, the formation of the proteasomal ATPase PAN-20S proteasome complex, via the docking of the C-termini of PAN into the intersubunit pockets in the alpha-rings, triggers opening of the gate for substrate entry. Interconversion between the open-gate and close-gate conformations leads to a dynamic regulation of the 20S proteasome proteolysis activity. Functionally, component of the proteasome core, a large protease complex with broad specificity involved in protein degradation. The sequence is that of Proteasome subunit alpha from Methanoregula boonei (strain DSM 21154 / JCM 14090 / 6A8).